Here is a 376-residue protein sequence, read N- to C-terminus: Lactosylceramide 1,3-N-acetyl-beta-D-glucosaminyltransferase (376 aa).

The Cytoplasmic portion of the chain corresponds to 1 to 13 (MRLFVSRRVKRWK). The helical; Signal-anchor for type II membrane protein transmembrane segment at 14-34 (IFHFFVTCFILSFMVFWSPIN) threads the bilayer. Over 35-376 (NYIMSHMKSY…NSYPCWAAFA (342 aa)) the chain is Lumenal. A glycan (N-linked (GlcNAc...) asparagine) is linked at asparagine 57.

Belongs to the glycosyltransferase 31 family. Highly expressed in adult spleen, placenta and cerebellar Purkinje cells where it colocalizes with HNK-1. Expressed at lower level in brain, lung, thymus and muscle.

Its subcellular location is the golgi apparatus membrane. The enzyme catalyses a beta-D-Gal-(1-&gt;4)-beta-D-Glc-(1&lt;-&gt;1)-Cer(d18:1(4E)) + UDP-N-acetyl-alpha-D-glucosamine = a beta-D-GlcNAc-(1-&gt;3)-beta-D-Gal-(1-&gt;4)-beta-D-Glc-(1&lt;-&gt;1)-Cer(d18:1(4E)) + UDP + H(+). It catalyses the reaction a neolactoside nLc4Cer(d18:1(4E)) + UDP-N-acetyl-alpha-D-glucosamine = a neolactoside IV(3)-beta-GlcNAc-nLc4Cer(d18:1(4E)) + UDP + H(+). It functions in the pathway protein modification; protein glycosylation. In terms of biological role, beta-1,3-N-acetylglucosaminyltransferase that plays a key role in the synthesis of lacto- or neolacto-series carbohydrate chains on glycolipids, notably by participating in biosynthesis of HNK-1 and Lewis X carbohydrate structures. Has strong activity toward lactosylceramide (LacCer) and neolactotetraosylceramide (nLc(4)Cer; paragloboside), resulting in the synthesis of Lc(3)Cer and neolactopentaosylceramide (nLc(5)Cer), respectively. Plays a central role in regulating neolacto-series glycolipid synthesis during embryonic development. This chain is Lactosylceramide 1,3-N-acetyl-beta-D-glucosaminyltransferase, found in Mus musculus (Mouse).